A 184-amino-acid polypeptide reads, in one-letter code: Nucleoside triphosphate pyrophosphatase (184 aa).

The Proton acceptor role is filled by D71.

The protein belongs to the Maf family. A divalent metal cation serves as cofactor.

The protein resides in the cytoplasm. The enzyme catalyses a ribonucleoside 5'-triphosphate + H2O = a ribonucleoside 5'-phosphate + diphosphate + H(+). It carries out the reaction a 2'-deoxyribonucleoside 5'-triphosphate + H2O = a 2'-deoxyribonucleoside 5'-phosphate + diphosphate + H(+). In terms of biological role, nucleoside triphosphate pyrophosphatase. May have a dual role in cell division arrest and in preventing the incorporation of modified nucleotides into cellular nucleic acids. The sequence is that of Nucleoside triphosphate pyrophosphatase from Synechococcus sp. (strain CC9605).